The following is a 389-amino-acid chain: Alcohol dehydrogenase-like 5 (389 aa).

Zn(2+) is bound by residues Cys54, Thr56, His77, Cys107, Cys110, Cys113, Cys121, and Cys186. Positions 56 and 77 each coordinate an alcohol. An NAD(+)-binding site is contributed by Thr56. Residues 211 to 216 (GLGAVG), Asp235, Lys240, 305 to 307 (LGI), Phe332, and Arg382 contribute to the NAD(+) site.

Belongs to the zinc-containing alcohol dehydrogenase family. Class-III subfamily. Homodimer. It depends on Zn(2+) as a cofactor.

The protein resides in the cytoplasm. It carries out the reaction a primary alcohol + NAD(+) = an aldehyde + NADH + H(+). It catalyses the reaction a secondary alcohol + NAD(+) = a ketone + NADH + H(+). In Arabidopsis thaliana (Mouse-ear cress), this protein is Alcohol dehydrogenase-like 5.